Reading from the N-terminus, the 580-residue chain is MYPLDGSARPHPPGTTRLNSVEPDKQIGFTVLVRPQTGAPRLPDLAQWQAIPIAERQFLSTAGFERTYGSSEDDIVSVASFLEKAGMTIRSRHAGAGTVEVQAKTCQIHSVFAVQLLYYRGQLRPAARKRRDDKQPAEETYIGFEGCISLPAALHDKVIHIFGLDTRTFGASGGYSGDPPRAQRLIVAELAALYGFPAGVDASQQTIGIFSGEGNDDKGQSLSNYRPADVAAYFNNQTVGYNRAPTVVPVSLTVADQTYRNDPDHPTQELSQDIMTAATIAQGCTVNVYFSDLTEQGWLAFLTRVLFPQGEEKRPTIVSISWTMYDEQTYRDRLSFLFQRLAVVGTSVFAIAGDWGANNNIIDGQPHVGWPGSDPWVTCVGGTVVGNVRSSGAFTEHAWSDRDNPDSQFTIDGHLGVTGGGMSRVFATPPYQLSSGISAVTDCNGERWTGGRFIPDITGMVGFRGFIVNGKRNYFIGTSCSTPLYAGLFAALASALGGGGEGGVLFGPLNTVLYQIDRGVYRDITFGHNDSGDMPACAYFAAGEGYDTVSGLGSVDGRRTLEELRRIYWPKTKGFGCFRN.

The tract at residues 1–21 (MYPLDGSARPHPPGTTRLNSV) is disordered. The Peptidase S53 domain occupies 181–567 (RAQRLIVAEL…RRTLEELRRI (387 aa)). N-linked (GlcNAc...) asparagine glycosylation is present at Asn236. Active-site charge relay system residues include Glu269, Asp273, and Ser479. Ca(2+) contacts are provided by Asp523 and Ile524. A glycan (N-linked (GlcNAc...) asparagine) is linked at Asn529. Residues Gly543, Gly545, and Asp547 each coordinate Ca(2+).

Ca(2+) is required as a cofactor.

It is found in the secreted. The protein localises to the extracellular space. The enzyme catalyses Release of an N-terminal tripeptide from a polypeptide.. Functionally, secreted tripeptidyl-peptidase which degrades proteins at acidic pHs and is involved in virulence. This chain is Tripeptidyl-peptidase sed5 (sed5), found in Aspergillus fumigatus (strain ATCC MYA-4609 / CBS 101355 / FGSC A1100 / Af293) (Neosartorya fumigata).